Reading from the N-terminus, the 97-residue chain is CLAVATA3/ESR (CLE)-related protein ESR2-C (97 aa).

The interval 1–97 (TRTDDKPGVN…IGPPPFLDRY (97 aa)) is disordered. 2 positions are modified to hydroxyproline: Pro47 and Pro50. Pro50 carries an O-linked (Ara...) hydroxyproline glycan.

Belongs to the CLV3/ESR signal peptide family. Post-translationally, the O-glycosylation (arabinosylation) of the hydroxyproline Pro-50 enhances binding affinity of the ESR2Cp peptide for its receptor. As to expression, seed endosperm.

The protein resides in the secreted. It localises to the extracellular space. In terms of biological role, extracellular signal peptide that regulates cell fate. This Zea mays (Maize) protein is CLAVATA3/ESR (CLE)-related protein ESR2-C.